Consider the following 85-residue polypeptide: U4-theraphotoxin-Hhn1i (85 aa).

The N-terminal stretch at 1–22 is a signal peptide; sequence MKVTLIAILTCAAVLVLHTTAA. Residues 23–48 constitute a propeptide that is removed on maturation; the sequence is EELEAESQLMEVGMPDTELAAVDEER. Disulfide bonds link Cys52/Cys66, Cys56/Cys77, and Cys71/Cys82.

It belongs to the neurotoxin 12 (Hwtx-2) family. 02 (Hwtx-2) subfamily. In terms of tissue distribution, expressed by the venom gland.

It is found in the secreted. Postsynaptic neurotoxin. The polypeptide is U4-theraphotoxin-Hhn1i (Cyriopagopus hainanus (Chinese bird spider)).